We begin with the raw amino-acid sequence, 140 residues long: Nucleoside diphosphate kinase (140 aa).

Residues K11, F59, R87, T93, R104, and N114 each contribute to the ATP site. H117 (pros-phosphohistidine intermediate) is an active-site residue.

It belongs to the NDK family. As to quaternary structure, homotetramer. It depends on Mg(2+) as a cofactor.

The protein resides in the cytoplasm. It carries out the reaction a 2'-deoxyribonucleoside 5'-diphosphate + ATP = a 2'-deoxyribonucleoside 5'-triphosphate + ADP. It catalyses the reaction a ribonucleoside 5'-diphosphate + ATP = a ribonucleoside 5'-triphosphate + ADP. In terms of biological role, major role in the synthesis of nucleoside triphosphates other than ATP. The ATP gamma phosphate is transferred to the NDP beta phosphate via a ping-pong mechanism, using a phosphorylated active-site intermediate. The chain is Nucleoside diphosphate kinase from Novosphingobium aromaticivorans (strain ATCC 700278 / DSM 12444 / CCUG 56034 / CIP 105152 / NBRC 16084 / F199).